A 419-amino-acid polypeptide reads, in one-letter code: MSITITYRIETPGSIEAMADKIASDQSTGTFVPVPGETEELKSRVAARVLGIRQLEDAKRPTWPEVAEGHGPLRRADVDIAFPLDAIGTDLSALMTIAIGGVFSIKGMTGIRIVDMKLPNAFRGAHPGPQFGVAGSKRLTGVEGRPIIGTIVKPALGLRPVETAELVGELINSGVDFIKDDEKLMSPAYSPLKERVAAIMPRILDHEQKTGKKVMYAFGISHADPDEMMRNHDLVLEAGGNCAVVNINSIGFGGMSFLRKRSGLVLHAHRNGWDVLTRDPGAGMDFKVYQQFWRLLGVDQFQINGIRVKYWEPDESFIESFKAVSTPLFDPSDCPLPVAGSGQWGGQAPETYQRTGRTTDLLYLCGGGIVSHPSGPAAGVRAVQQAWEAAVADIPLANYAKDHPELAASIAKFSDGKGA.

Mg(2+) contacts are provided by Lys179, Asp181, and Glu182. Lys179 is modified (N6-carboxylysine).

Belongs to the RuBisCO large chain family. The cofactor is Mg(2+).

It catalyses the reaction 3-oxoisoapionate 4-phosphate + H(+) = L-erythrulose 1-phosphate + CO2. It participates in carbohydrate metabolism. Its function is as follows. Involved in catabolism of D-apiose. Catalyzes the decarboxylation of 3-oxo-isoapionate 4-phosphate to L-erythrulose 1-phosphate. This is 3-oxo-isoapionate-4-phosphate decarboxylase from Rhizobium rhizogenes (strain K84 / ATCC BAA-868) (Agrobacterium radiobacter).